We begin with the raw amino-acid sequence, 757 residues long: Protein ALTERED SEED GERMINATION 2 (757 aa).

6 WD repeats span residues 6 to 43, 48 to 87, 91 to 132, 145 to 185, 213 to 253, and 277 to 316; these read FHDG…LSQE, GHQG…LLHS, GHTA…GRAE, CHTR…SCPP, KQTL…PLAS, and RTNL…CSTG. A Nuclear localization signal motif is present at residues 245–257; that stretch reads RRMLPPLASSRKR. One copy of the TPR repeat lies at 442–475; the sequence is FKAHYYMSEALQQLGKCKEALDFATAAQHMNPSD. Residues 519 to 601 are disordered; the sequence is ANSDSSHDMS…SSSQNDRTSY (83 aa). A compositionally biased stretch (basic and acidic residues) spans 523–532; that stretch reads SSHDMSRSER. Acidic residues predominate over residues 533-543; the sequence is EDSDYDEELEL. Residues 582–601 show a composition bias toward polar residues; sequence TVDNASSGTASSSQNDRTSY. WD repeat units follow at residues 618-658 and 661-700; these read NVGT…LMKV and GDES…PSIV. Cysteine 754 is lipidated: S-12-hydroxyfarnesyl cysteine; by FTB/ERA1.

In terms of assembly, interacts with DDB1; the subcellular localization of this complex depends on farnesylation status. Binds to HDA9 in the cytosol when farnesylated. Farnesylated at Cys-754 by FTB/ERA1; this modification triggers an exclusion from the nucleus.

It is found in the nucleus. Its subcellular location is the cytoplasm. The protein localises to the cytosol. It participates in protein modification; protein ubiquitination. Functionally, may function as a substrate adapter for CUL4-DDB1 E3 ubiquitin-protein ligase complex. Negative regulator of fatty acid biosynthetic process and accumulation. Acts as an abscisic acid (ABA) negative regulator. Involved in responses to salt (NaCl) and osmotic (e.g. in response to mannitol and PEG) stresses. In Arabidopsis thaliana (Mouse-ear cress), this protein is Protein ALTERED SEED GERMINATION 2.